The sequence spans 511 residues: uncharacterized protein (511 aa).

14 helical membrane passes run 7–27 (WVISLLAVLAVGPGLMSNTAL), 46–66 (VNPILIGNMAFALLVPAGPLL), 80–100 (LPVFILGSLLIACSGDIALMA), 107–127 (GAATGVMLMIMIPMLVLSFPI), 134–154 (LLVLIGGFYGSVIIGTILGTI), 163–183 (WLFFIFGTLSLIGVAVSYFFL), 200–220 (AGILLSVFLAAASAVSFIFLQ), 226–246 (SGYVWIGFGVTLCLLIGLLIV), 266–286 (VLGLLIIAAGTITVAVSLSAF), 301–321 (LILLSLTLLIGVAIAAILSAL), 329–349 (GMLGIIGGLILVFVNFQWLHI), 357–377 (MFAALFIMLAAGTGLTVAAGL), 394–414 (TAVQFLRLFVYMGVPILIGFF), and 437–457 (LFFISFILSVLLVCLSFCMNA). Residues 465-486 (AHKPHDKAKTAPEKPAVSAQGL) are disordered.

Belongs to the major facilitator superfamily.

The protein localises to the cell membrane. This is an uncharacterized protein from Bacillus subtilis (strain 168).